A 315-amino-acid chain; its full sequence is Cytochrome c biogenesis protein CcsA (315 aa).

7 consecutive transmembrane segments (helical) span residues 14–34 (VVSL…ISFW), 72–92 (ISNL…AQLF), 101–121 (IVSA…SFVL), 146–166 (VIMC…GVFL), 221–241 (SITA…VWAN), 255–272 (TWAL…HTRL), and 282–302 (AILA…VNLL).

This sequence belongs to the CcmF/CycK/Ccl1/NrfE/CcsA family. May interact with ccs1.

It is found in the cellular thylakoid membrane. Its function is as follows. Required during biogenesis of c-type cytochromes (cytochrome c6 and cytochrome f) at the step of heme attachment. The sequence is that of Cytochrome c biogenesis protein CcsA from Prochlorococcus marinus (strain NATL1A).